The chain runs to 119 residues: MKIASLKLLLLVSLLFAVTQNGISIQNSETSVNQNSCMPNEPRCTGCPGGGSGGYRGPPPPCCKNDSDCKAHCPEGGYCSNQCDCVCNLVKVMNNDVRCQVDTDCNMKCSKQGYCKLAS.

A signal peptide spans 1-24; it reads MKIASLKLLLLVSLLFAVTQNGIS. Disulfide bonds link C44/C99, C63/C79, C69/C83, and C73/C85.

This sequence belongs to the DEFL family.

It is found in the secreted. The protein is Defensin-like protein 260 of Arabidopsis thaliana (Mouse-ear cress).